We begin with the raw amino-acid sequence, 505 residues long: Deoxyguanosinetriphosphate triphosphohydrolase (505 aa).

The 208-residue stretch at 66-273 (RLTHSLEVQQ…MEAADDISYC (208 aa)) folds into the HD domain.

It belongs to the dGTPase family. Type 1 subfamily. As to quaternary structure, homotetramer. Mg(2+) is required as a cofactor.

It catalyses the reaction dGTP + H2O = 2'-deoxyguanosine + triphosphate + H(+). In terms of biological role, dGTPase preferentially hydrolyzes dGTP over the other canonical NTPs. The protein is Deoxyguanosinetriphosphate triphosphohydrolase of Yersinia enterocolitica serotype O:8 / biotype 1B (strain NCTC 13174 / 8081).